A 123-amino-acid chain; its full sequence is Fluoride-specific ion channel FluC (123 aa).

A run of 4 helical transmembrane segments spans residues 7 to 27 (LAVA…SGLL), 39 to 59 (MVNG…FWGF), 68 to 88 (FLGT…YETF), and 101 to 121 (LNVA…FLLA). Gly-75 and Ser-78 together coordinate Na(+).

Belongs to the fluoride channel Fluc/FEX (TC 1.A.43) family.

The protein localises to the cell membrane. The catalysed reaction is fluoride(in) = fluoride(out). With respect to regulation, na(+) is not transported, but it plays an essential structural role and its presence is essential for fluoride channel function. Its function is as follows. Fluoride-specific ion channel. Important for reducing fluoride concentration in the cell, thus reducing its toxicity. This Thermococcus gammatolerans (strain DSM 15229 / JCM 11827 / EJ3) protein is Fluoride-specific ion channel FluC.